The primary structure comprises 120 residues: UPF0145 protein UNCMA_30400 (120 aa).

This sequence belongs to the UPF0145 family.

The sequence is that of UPF0145 protein UNCMA_30400 from Methanocella arvoryzae (strain DSM 22066 / NBRC 105507 / MRE50).